The chain runs to 1215 residues: Protein benign gonial cell neoplasm (1215 aa).

The ANK repeat unit spans residues 407–439; sequence TGKTAVHFASELNKANHLRLLLFMGADPYIVDL. A Phosphothreonine modification is found at Thr-898.

Part of a complex composed of at least mei-P26, bam, bgcn and Sxl; this complex is involved in translational repression of nanos mRNA. Interacts with bam (via C-terminus); the interaction is direct. Interacts with mei-P26; the interaction is direct and does not require bam. Weakly interacts with wh/wuho; this interaction may be required for the function or formation of the mei-P26-bgcn-bam-Sxl complex. Part of a complex composed of at least tut, bam and bgcn; complex formation does not require RNA. Interacts with tut; the interaction is indirect and is mediated by bam. As part of the bam-bgcn-tut complex associates with twin; may recruit the CCR4-NOT1 deadenylation complex to mRNA 3'UTRs to mediate post-transcriptional regulation of expression. Expressed in testis and in 5-8 germline stem cells of ovaries, immediately adjacent to terminal filament. Expressed in ovarian germline cells throughout the germarium (at protein level).

Its function is as follows. Forms a complex with tut and bam involved in 3'UTR-dependent post-transcriptional repression of several 3'-RNA processing factors, which promotes germline stem cell lineage differentiation and mitosis-to-meiosis transition. Part of a complex with bam involved in 3'-UTR-dependent translational repression of a subset of mRNAs, including those for mei-P26, nanos and shg/E-cadherin; may act as a promiscuous RNA-binding protein tethering bam to its target mRNAs. Required for regulating the progression of gonialblast cells through transit amplification and differentiation into gametes. The protein is Protein benign gonial cell neoplasm of Drosophila melanogaster (Fruit fly).